Reading from the N-terminus, the 405-residue chain is Eukaryotic translation initiation factor 5 (405 aa).

Residue 27 to 34 coordinates GTP; sequence GRGNGIKT. A disordered region spans residues 143–202; sequence NPPDSVSGSKKKKKAATASANVRGGGLSISDIAQGKSQNAPSDGTGSSTPQHHDEDEDEL. Phosphoserine occurs at positions 170 and 172. The segment covering 177-192 has biased composition (polar residues); that stretch reads GKSQNAPSDGTGSSTP. Thr191 bears the Phosphothreonine mark. Ser228 bears the Phosphoserine mark. In terms of domain architecture, W2 spans 241–402; the sequence is VNSELTQLDE…ETAESDDDEE (162 aa). Thr317 carries the phosphothreonine modification. At Ser397 the chain carries Phosphoserine.

The protein belongs to the eIF-2-beta/eIF-5 family. As to quaternary structure, monomer. The factors eIF-1, eIF-2, eIF-3, TIF5/eIF-5 and methionyl-tRNAi form a multifactor complex (MFC) that may bind to the 40S ribosome. TIF32, NIP1 and TIF5/eIF-5 comprise a minimal 40S-ribosome-binding unit. Interacts with NIP1. Interacts with SUI3.

Its function is as follows. Catalyzes the hydrolysis of GTP bound to the 40S ribosomal initiation complex (40S.mRNA.Met-tRNA[F].eIF-2.GTP) with the subsequent joining of a 60S ribosomal subunit resulting in the release of eIF-2 and the guanine nucleotide. The subsequent joining of a 60S ribosomal subunit results in the formation of a functional 80S initiation complex (80S.mRNA.Met-tRNA[F]). eIF-5 is essential for cell viability. The protein is Eukaryotic translation initiation factor 5 (TIF5) of Saccharomyces cerevisiae (strain ATCC 204508 / S288c) (Baker's yeast).